We begin with the raw amino-acid sequence, 357 residues long: UDP-N-acetylglucosamine--N-acetylmuramyl-(pentapeptide) pyrophosphoryl-undecaprenol N-acetylglucosamine transferase (357 aa).

UDP-N-acetyl-alpha-D-glucosamine-binding positions include 12 to 14, asparagine 124, arginine 162, serine 190, isoleucine 243, 262 to 267, and glutamine 288; these read TGG and ALTVAE.

This sequence belongs to the glycosyltransferase 28 family. MurG subfamily.

It is found in the cell inner membrane. It carries out the reaction di-trans,octa-cis-undecaprenyl diphospho-N-acetyl-alpha-D-muramoyl-L-alanyl-D-glutamyl-meso-2,6-diaminopimeloyl-D-alanyl-D-alanine + UDP-N-acetyl-alpha-D-glucosamine = di-trans,octa-cis-undecaprenyl diphospho-[N-acetyl-alpha-D-glucosaminyl-(1-&gt;4)]-N-acetyl-alpha-D-muramoyl-L-alanyl-D-glutamyl-meso-2,6-diaminopimeloyl-D-alanyl-D-alanine + UDP + H(+). It participates in cell wall biogenesis; peptidoglycan biosynthesis. Cell wall formation. Catalyzes the transfer of a GlcNAc subunit on undecaprenyl-pyrophosphoryl-MurNAc-pentapeptide (lipid intermediate I) to form undecaprenyl-pyrophosphoryl-MurNAc-(pentapeptide)GlcNAc (lipid intermediate II). The protein is UDP-N-acetylglucosamine--N-acetylmuramyl-(pentapeptide) pyrophosphoryl-undecaprenol N-acetylglucosamine transferase of Alcanivorax borkumensis (strain ATCC 700651 / DSM 11573 / NCIMB 13689 / SK2).